Consider the following 331-residue polypeptide: Mitochondrial glycine transporter (331 aa).

Solcar repeat units follow at residues 19-103 (SRTT…LRQG), 132-216 (LSNW…LKRR), and 234-318 (SSSS…LILR). 6 helical membrane passes run 25–50 (FAAGLCSGLTSSILLQPADLLKTRVQ), 78–104 (GTLPSALRTGFGSALYFTSLNALRQGL), 138–163 (LATGAVARTAAGFVMMPVTVLKVRYE), 191–214 (GFGATAARDAPYAGLYVLFYEQLK), 238–264 (INFVSGGLAAGLATAITNPFDAVKTRL), and 293–311 (GLGLRITRKALSSALAWTV).

The protein belongs to the mitochondrial carrier (TC 2.A.29) family. SLC25A38 subfamily.

Its subcellular location is the mitochondrion inner membrane. The catalysed reaction is glycine(in) = glycine(out). Its function is as follows. Mitochondrial glycine transporter that imports glycine into the mitochondrial matrix. Plays an important role in providing glycine for the first enzymatic step in heme biosynthesis, the condensation of glycine with succinyl-CoA to produce 5-aminolevulinate (ALA) in the mitochondrial matrix. The polypeptide is Mitochondrial glycine transporter (Neosartorya fischeri (strain ATCC 1020 / DSM 3700 / CBS 544.65 / FGSC A1164 / JCM 1740 / NRRL 181 / WB 181) (Aspergillus fischerianus)).